Here is an 844-residue protein sequence, read N- to C-terminus: Beta-mannosidase B (844 aa).

Glutamate 432 (proton donor) is an active-site residue. Asparagine 723 is a glycosylation site (N-linked (GlcNAc...) asparagine).

Belongs to the glycosyl hydrolase 2 family. Beta-mannosidase B subfamily.

The catalysed reaction is Hydrolysis of terminal, non-reducing beta-D-mannose residues in beta-D-mannosides.. The protein operates within glycan metabolism; N-glycan degradation. Exoglycosidase that cleaves the single beta-linked mannose residue from the non-reducing end of beta-mannosidic oligosaccharides of various complexity and length. Prefers mannobiose over mannotriose and has no activity against polymeric mannan. Is also severely restricted by galactosyl substitutions at the +1 subsite. This Aspergillus niger (strain ATCC MYA-4892 / CBS 513.88 / FGSC A1513) protein is Beta-mannosidase B (mndB).